We begin with the raw amino-acid sequence, 332 residues long: GTP cyclohydrolase-2 (332 aa).

2 disordered regions span residues 1–20 (MASKDIVHPQPERRHGSETH) and 25–46 (PLLSPTLTPSHIPSQTPQIPPE). Positions 29 to 41 (PTLTPSHIPSQTP) are enriched in polar residues. 171 to 175 (RIHSE) serves as a coordination point for GTP. Cys176, Cys187, and Cys189 together coordinate Zn(2+). Residues Gln192, 214–216 (EGR), and Thr236 contribute to the GTP site. The active-site Proton acceptor is Asp248. Arg250 acts as the Nucleophile in catalysis. Positions 271 and 276 each coordinate GTP.

This sequence belongs to the GTP cyclohydrolase II family. Zn(2+) is required as a cofactor.

It carries out the reaction GTP + 4 H2O = 2,5-diamino-6-hydroxy-4-(5-phosphoribosylamino)-pyrimidine + formate + 2 phosphate + 3 H(+). The protein operates within cofactor biosynthesis; riboflavin biosynthesis; 5-amino-6-(D-ribitylamino)uracil from GTP: step 1/4. In terms of biological role, catalyzes the conversion of GTP to 2,5-diamino-6-ribosylamino-4(3H)-pyrimidinone 5'-phosphate (DARP), formate and pyrophosphate. The protein is GTP cyclohydrolase-2 (RIB1) of Meyerozyma guilliermondii (strain ATCC 6260 / CBS 566 / DSM 6381 / JCM 1539 / NBRC 10279 / NRRL Y-324) (Yeast).